The sequence spans 398 residues: Enoate reductase 1 (398 aa).

The FMN site is built by Thr37 and His191. Positions 191 and 194 each coordinate substrate. Tyr196 (proton donor) is an active-site residue. FMN is bound by residues Arg243 and Arg348. Tyr375 provides a ligand contact to substrate.

This sequence belongs to the NADH:flavin oxidoreductase/NADH oxidase family. As to quaternary structure, homodimer or heterodimer. It depends on FMN as a cofactor.

It catalyses the reaction butanoate + NAD(+) = (2E)-2-butenoate + NADH + H(+). Enoate reductase with broad substrate specificity for different alpha,beta-unsaturated carbonyl compounds. Prefers NADPH over NADH as cofactor. The chain is Enoate reductase 1 (KYE1) from Kluyveromyces lactis (strain ATCC 8585 / CBS 2359 / DSM 70799 / NBRC 1267 / NRRL Y-1140 / WM37) (Yeast).